The sequence spans 452 residues: UDP-N-acetylmuramoylalanine--D-glutamate ligase (452 aa).

Residue 115–121 participates in ATP binding; it reads GTNGKTT.

The protein belongs to the MurCDEF family.

The protein localises to the cytoplasm. It catalyses the reaction UDP-N-acetyl-alpha-D-muramoyl-L-alanine + D-glutamate + ATP = UDP-N-acetyl-alpha-D-muramoyl-L-alanyl-D-glutamate + ADP + phosphate + H(+). The protein operates within cell wall biogenesis; peptidoglycan biosynthesis. Cell wall formation. Catalyzes the addition of glutamate to the nucleotide precursor UDP-N-acetylmuramoyl-L-alanine (UMA). The chain is UDP-N-acetylmuramoylalanine--D-glutamate ligase from Elusimicrobium minutum (strain Pei191).